Reading from the N-terminus, the 479-residue chain is 5-hydroxytryptamine receptor 7 (479 aa).

Residues 1-83 lie on the Extracellular side of the membrane; the sequence is MMDVNSSGRP…INYGRVEKVV (83 aa). 2 N-linked (GlcNAc...) asparagine glycosylation sites follow: asparagine 5 and asparagine 66. A helical transmembrane segment spans residues 84–108; that stretch reads IGSILTLITLLTIAGNCLVVISVCF. The Cytoplasmic segment spans residues 109-118; sequence VKKLRQPSNY. Residues 119–140 traverse the membrane as a helical segment; the sequence is LIVSLALADLSVAVAVMPFVSV. Residues 141 to 152 lie on the Extracellular side of the membrane; that stretch reads TDLIGGKWIFGH. A helical membrane pass occupies residues 153–178; that stretch reads FFCNVFIAMDVMCCTASIMTLCVISI. The cysteines at positions 155 and 231 are disulfide-linked. Aspartate 162 lines the serotonin pocket. At 179-198 the chain is on the cytoplasmic side; that stretch reads DRYLGITRPLTYPVRQNGKC. A helical membrane pass occupies residues 199-219; that stretch reads MAKMILSVWLLSASITLPPLF. Over 220–237 the chain is Extracellular; sequence GWAQNVNDDKVCLISQDF. Residues 238-260 traverse the membrane as a helical segment; it reads GYTIYSTAVAFYIPMSVMLFMYY. Over 261–326 the chain is Cytoplasmic; that stretch reads QIYKAARKSA…SIFKREQKAA (66 aa). A helical transmembrane segment spans residues 327 to 352; sequence TTLGIIVGAFTVCWLPFFLLSTARPF. At 353–363 the chain is on the extracellular side; that stretch reads ICGTSCSCIPL. The chain crosses the membrane as a helical span at residues 364-387; that stretch reads WVERTFLWLGYANSLINPFIYAFF. The Cytoplasmic segment spans residues 388–479; sequence NRDLRTTYRS…TVEKKVMIHD (92 aa). Cysteine 401 is lipidated: S-palmitoyl cysteine.

This sequence belongs to the G-protein coupled receptor 1 family. In terms of tissue distribution, predominant isoform in spleen, caudate and hippocampus. Expressed at lower levels. As to expression, minor isoform in terms of expression.

Its subcellular location is the cell membrane. Its function is as follows. G-protein coupled receptor for 5-hydroxytryptamine (serotonin), a biogenic hormone that functions as a neurotransmitter, a hormone and a mitogen. Ligand binding causes a conformation change that triggers signaling via guanine nucleotide-binding proteins (G proteins) and modulates the activity of downstream effectors. HTR7 is coupled to G(s) G alpha proteins and mediates activation of adenylate cyclase activity. The chain is 5-hydroxytryptamine receptor 7 from Homo sapiens (Human).